Here is a 79-residue protein sequence, read N- to C-terminus: Small ribosomal subunit protein uS11 (79 aa).

S14 bears the Phosphoserine mark. Glycyl lysine isopeptide (Lys-Gly) (interchain with G-Cter in SUMO2) cross-links involve residues K59 and K61.

Belongs to the universal ribosomal protein uS11 family. Component of the small ribosomal subunit. Part of the small subunit (SSU) processome, composed of more than 70 proteins and the RNA chaperone small nucleolar RNA (snoRNA) U3.

It is found in the cytoplasm. It localises to the nucleus. The protein resides in the nucleolus. In terms of biological role, component of the small ribosomal subunit. The ribosome is a large ribonucleoprotein complex responsible for the synthesis of proteins in the cell. Part of the small subunit (SSU) processome, first precursor of the small eukaryotic ribosomal subunit. During the assembly of the SSU processome in the nucleolus, many ribosome biogenesis factors, an RNA chaperone and ribosomal proteins associate with the nascent pre-rRNA and work in concert to generate RNA folding, modifications, rearrangements and cleavage as well as targeted degradation of pre-ribosomal RNA by the RNA exosome. This is Small ribosomal subunit protein uS11 (RPS14) from Sus scrofa (Pig).